The primary structure comprises 340 residues: MDKQRVAVIGPGSWGTALSQVLNDNGHEVRIWGNIAEQINEINDEHTNKRYFKDIVLDEKIKAYHDLEEALKDADAVLFVVPTKVTRLVAKQVAQALDHKVKIMHASKGLEPNTHERISTILEEEIPAELRSEIVVVSGPSHAEETIVRDITLITAASKDLETAKYVQELFSNHYFRLYTNTDVIGVETAGALKNIIAVGAGALHGLGYGDNAKAAIITRGLAEITRLGVKLGANPLTYSGLSGVGDLIVTGTSVHSRNWRAGNALGRGEKLADIEANMGMVIEGISTTKAAYELAQELDVYMPITQAIYKVIYQNCNIKEAIYEIMNNEFKAENEWTSF.

NADPH is bound by residues serine 13, tryptophan 14, and lysine 108. Sn-glycerol 3-phosphate-binding residues include lysine 108, glycine 139, and serine 141. Alanine 143 is an NADPH binding site. Sn-glycerol 3-phosphate contacts are provided by lysine 194, aspartate 247, serine 257, arginine 258, and asparagine 259. Residue lysine 194 is the Proton acceptor of the active site. Residue arginine 258 coordinates NADPH. Residues valine 282 and glutamate 284 each coordinate NADPH.

Belongs to the NAD-dependent glycerol-3-phosphate dehydrogenase family.

It is found in the cytoplasm. It carries out the reaction sn-glycerol 3-phosphate + NAD(+) = dihydroxyacetone phosphate + NADH + H(+). The catalysed reaction is sn-glycerol 3-phosphate + NADP(+) = dihydroxyacetone phosphate + NADPH + H(+). It functions in the pathway membrane lipid metabolism; glycerophospholipid metabolism. In terms of biological role, catalyzes the reduction of the glycolytic intermediate dihydroxyacetone phosphate (DHAP) to sn-glycerol 3-phosphate (G3P), the key precursor for phospholipid synthesis. This chain is Glycerol-3-phosphate dehydrogenase [NAD(P)+], found in Streptococcus sanguinis (strain SK36).